Consider the following 518-residue polypeptide: Cytochrome P450 monooxygenase COX1 (518 aa).

Residues 7-25 (VLIALSSIVVAYFVKTALA) form a helical membrane-spanning segment. N-linked (GlcNAc...) asparagine glycosylation is found at Asn-48, Asn-100, Asn-292, Asn-302, and Asn-351. Cys-450 is a heme binding site. Asn-457 carries N-linked (GlcNAc...) asparagine glycosylation.

The protein belongs to the cytochrome P450 family. The cofactor is heme.

The protein localises to the membrane. Its pathway is secondary metabolite biosynthesis. Cytochrome P450 monooxygenase; part of the gene cluster that mediates the biosynthesis of alpha-cuprenene and oxidized derivatives. The alpha-cuprenene synthase COP6 is the only sesquiterpene synthase identified in C.cinereus that appears to be part of a biosynthetic gene cluster and is highly specific since it catalyzes the cyclization of (2E,6E)-farnesyl diphosphate into only one product, alpha-cuprenene. The cytochrome P450 monooxygenase COX2 then oxidizes the cyclohexadiene ring of alpha-cuprenene at positions 1 and 4, yielding first alpha-cuparene, followed by alpha-cuparophenol and a further yet unidentified compound resulting from one additional oxidation step. The cytochrome P450 monooxygenase COX1 then likely catalyzes the oxidation at position 9 of the pentane ring of alpha-cuprenene to give the corresponding hydroxy or ketone derivatives. The polypeptide is Cytochrome P450 monooxygenase COX1 (Coprinopsis cinerea (strain Okayama-7 / 130 / ATCC MYA-4618 / FGSC 9003) (Inky cap fungus)).